The sequence spans 92 residues: uncharacterized protein (92 aa).

An N-terminal signal peptide occupies residues 1-29 (MAAQTDYKKQVVGILLSLAFVLFVFSFSE).

This is an uncharacterized protein from Bacillus subtilis (strain 168).